We begin with the raw amino-acid sequence, 94 residues long: Small ribosomal subunit protein uS19 (94 aa).

It belongs to the universal ribosomal protein uS19 family.

Protein S19 forms a complex with S13 that binds strongly to the 16S ribosomal RNA. This is Small ribosomal subunit protein uS19 from Caldicellulosiruptor saccharolyticus (strain ATCC 43494 / DSM 8903 / Tp8T 6331).